A 467-amino-acid polypeptide reads, in one-letter code: ATP synthase subunit beta, chloroplastic (467 aa).

149-156 (GGAGVGKT) contacts ATP.

This sequence belongs to the ATPase alpha/beta chains family. F-type ATPases have 2 components, CF(1) - the catalytic core - and CF(0) - the membrane proton channel. CF(1) has five subunits: alpha(3), beta(3), gamma(1), delta(1), epsilon(1). CF(0) has four main subunits: a(1), b(1), b'(1) and c(9-12).

The protein localises to the plastid. It localises to the chloroplast thylakoid membrane. It catalyses the reaction ATP + H2O + 4 H(+)(in) = ADP + phosphate + 5 H(+)(out). Its function is as follows. Produces ATP from ADP in the presence of a proton gradient across the membrane. The catalytic sites are hosted primarily by the beta subunits. The sequence is that of ATP synthase subunit beta, chloroplastic from Cyanidioschyzon merolae (strain NIES-3377 / 10D) (Unicellular red alga).